Here is a 529-residue protein sequence, read N- to C-terminus: Heat shock protein 60 (529 aa).

A disordered region spans residues 460-484 (YQATVQHPPPQSSYEEDGRRPPTQP).

In Giardia intestinalis (Giardia lamblia), this protein is Heat shock protein 60.